Here is a 156-residue protein sequence, read N- to C-terminus: Ribosomal RNA large subunit methyltransferase H (156 aa).

Residues Leu-73, Gly-104, and 123 to 128 (IGPLTL) each bind S-adenosyl-L-methionine.

Belongs to the RNA methyltransferase RlmH family. In terms of assembly, homodimer.

The protein resides in the cytoplasm. It catalyses the reaction pseudouridine(1915) in 23S rRNA + S-adenosyl-L-methionine = N(3)-methylpseudouridine(1915) in 23S rRNA + S-adenosyl-L-homocysteine + H(+). Functionally, specifically methylates the pseudouridine at position 1915 (m3Psi1915) in 23S rRNA. The chain is Ribosomal RNA large subunit methyltransferase H from Stenotrophomonas maltophilia (strain K279a).